The primary structure comprises 520 residues: Aspartate-proton symporter (520 aa).

14 helical membrane-spanning segments follow: residues 13-33 (LFDLILIGMGAIFGSAWLFAV), 49-69 (ILGGAIILLIGLVYAELGAAL), 85-105 (HLVGYLISFVTIVAYTSLISI), 130-150 (TISGWILQFALLCLFFLLNYW), 161-181 (IISIFKYIVPITIIIVLIFHF), 201-221 (AAISTGGVMFAYLGLHPIVSV), 232-252 (IPIALIICIIVSTIIYTVLQV), 281-301 (IAVMLGLGWLATLVILDAILS), 345-365 (WLSFALSIFWTLPFPSWNALV), 366-386 (NVCSVALILSYAIAPISSAAL), 402-422 (MSIIGPLSFIFTAFIVYWSGW), 425-445 (VSWLLGSQLVMFLIYLCFSKY), 460-480 (AWWLIGFYIMMLIFSYIGSFG), and 482-502 (GLGIISNPVDLILVAIGSLAI).

The protein belongs to the amino acid-polyamine-organocation (APC) superfamily. AGT (TC 2.A.3.11) family.

The protein localises to the cell membrane. In terms of biological role, uptake of L-aspartate with the concomitant import of a proton. Can also transport aspartate hydroxamate and L-glutamate with lower affinity and efficiency. In Bacillus subtilis (strain 168), this protein is Aspartate-proton symporter (yveA).